The primary structure comprises 284 residues: MEMO1 family protein MmarC6_1286 (284 aa).

Belongs to the MEMO1 family.

This chain is MEMO1 family protein MmarC6_1286, found in Methanococcus maripaludis (strain C6 / ATCC BAA-1332).